A 141-amino-acid polypeptide reads, in one-letter code: Small ribosomal subunit protein bS6 (141 aa).

Positions 96–141 (VTGPSEMLKAEENRSERRERRERPEHADGAEGDDSNDSDNSDNADE) are disordered. The segment covering 103 to 124 (LKAEENRSERRERRERPEHADG) has biased composition (basic and acidic residues). A compositionally biased stretch (acidic residues) spans 125–141 (AEGDDSNDSDNSDNADE).

Belongs to the bacterial ribosomal protein bS6 family.

Binds together with bS18 to 16S ribosomal RNA. In Pseudomonas entomophila (strain L48), this protein is Small ribosomal subunit protein bS6.